The chain runs to 229 residues: Lipoprotein-releasing system ATP-binding protein LolD (229 aa).

In terms of domain architecture, ABC transporter spans 6–229 (LELDAIERTY…DGHLTPYVPA (224 aa)). 42 to 49 (GPSGSGKS) provides a ligand contact to ATP.

This sequence belongs to the ABC transporter superfamily. Lipoprotein translocase (TC 3.A.1.125) family. In terms of assembly, the complex is composed of two ATP-binding proteins (LolD) and two transmembrane proteins (LolC and LolE).

It localises to the cell inner membrane. In terms of biological role, part of the ABC transporter complex LolCDE involved in the translocation of mature outer membrane-directed lipoproteins, from the inner membrane to the periplasmic chaperone, LolA. Responsible for the formation of the LolA-lipoprotein complex in an ATP-dependent manner. This Maricaulis maris (strain MCS10) (Caulobacter maris) protein is Lipoprotein-releasing system ATP-binding protein LolD.